Here is a 279-residue protein sequence, read N- to C-terminus: Fatty-acid-binding protein 1 (279 aa).

3 residues coordinate dodecanoate: R103, Y116, and S183.

This sequence belongs to the chalcone isomerase family. As to expression, expressed in developing cotyledons, young seedlings, roots, seeds, embryos, macrospores, preanthesis and tapetum. Restricted to developing and reproductive tissues.

Its subcellular location is the plastid. The protein localises to the chloroplast stroma. Functionally, fatty-acid-binding protein. Interacts preferentially with saturated fatty acid. May be involved in alpha-linolenic (C18:3) metabolism. This is Fatty-acid-binding protein 1 (FAP1) from Arabidopsis thaliana (Mouse-ear cress).